A 138-amino-acid polypeptide reads, in one-letter code: Large ribosomal subunit protein eL14B (138 aa).

Ser-2 is modified (N-acetylserine).

This sequence belongs to the eukaryotic ribosomal protein eL14 family. Component of the large ribosomal subunit (LSU). Mature yeast ribosomes consist of a small (40S) and a large (60S) subunit. The 40S small subunit contains 1 molecule of ribosomal RNA (18S rRNA) and 33 different proteins (encoded by 57 genes). The large 60S subunit contains 3 rRNA molecules (25S, 5.8S and 5S rRNA) and 46 different proteins (encoded by 81 genes). N-terminally acetylated by acetyltransferase NatA.

The protein localises to the cytoplasm. In terms of biological role, component of the ribosome, a large ribonucleoprotein complex responsible for the synthesis of proteins in the cell. The small ribosomal subunit (SSU) binds messenger RNAs (mRNAs) and translates the encoded message by selecting cognate aminoacyl-transfer RNA (tRNA) molecules. The large subunit (LSU) contains the ribosomal catalytic site termed the peptidyl transferase center (PTC), which catalyzes the formation of peptide bonds, thereby polymerizing the amino acids delivered by tRNAs into a polypeptide chain. The nascent polypeptides leave the ribosome through a tunnel in the LSU and interact with protein factors that function in enzymatic processing, targeting, and the membrane insertion of nascent chains at the exit of the ribosomal tunnel. This Saccharomyces cerevisiae (strain ATCC 204508 / S288c) (Baker's yeast) protein is Large ribosomal subunit protein eL14B.